The following is a 122-amino-acid chain: Large ribosomal subunit protein uL14 (122 aa).

It belongs to the universal ribosomal protein uL14 family. As to quaternary structure, part of the 50S ribosomal subunit. Forms a cluster with proteins L3 and L19. In the 70S ribosome, L14 and L19 interact and together make contacts with the 16S rRNA in bridges B5 and B8.

Its function is as follows. Binds to 23S rRNA. Forms part of two intersubunit bridges in the 70S ribosome. The sequence is that of Large ribosomal subunit protein uL14 from Chlorobium limicola (strain DSM 245 / NBRC 103803 / 6330).